The primary structure comprises 294 residues: 4-hydroxy-tetrahydrodipicolinate synthase (294 aa).

Thr47 is a binding site for pyruvate. Catalysis depends on Tyr135, which acts as the Proton donor/acceptor. The active-site Schiff-base intermediate with substrate is Lys163. Thr205 is a binding site for pyruvate.

It belongs to the DapA family. As to quaternary structure, homotetramer; dimer of dimers.

The protein localises to the cytoplasm. The enzyme catalyses L-aspartate 4-semialdehyde + pyruvate = (2S,4S)-4-hydroxy-2,3,4,5-tetrahydrodipicolinate + H2O + H(+). It functions in the pathway amino-acid biosynthesis; L-lysine biosynthesis via DAP pathway; (S)-tetrahydrodipicolinate from L-aspartate: step 3/4. In terms of biological role, catalyzes the condensation of (S)-aspartate-beta-semialdehyde [(S)-ASA] and pyruvate to 4-hydroxy-tetrahydrodipicolinate (HTPA). In Rickettsia conorii (strain ATCC VR-613 / Malish 7), this protein is 4-hydroxy-tetrahydrodipicolinate synthase.